The chain runs to 875 residues: DNA topoisomerase 3-beta (875 aa).

A Toprim domain is found at 3–153; sequence SVLMVAEKPS…QVTYRAHFSA (151 aa). One can recognise a Topo IA-type catalytic domain in the interval 170–589; the sequence is NENEAKSVDA…AIKIFKLKFM (420 aa). The active-site O-(5'-phospho-DNA)-tyrosine intermediate is Y332. Residues 371 to 391 form a disordered region; that stretch reads QTPRKGKDAGDHPPITPMKLG.

Belongs to the type IA topoisomerase family.

It catalyses the reaction ATP-independent breakage of single-stranded DNA, followed by passage and rejoining.. Releases the supercoiling and torsional tension of DNA introduced during the DNA replication and transcription by transiently cleaving and rejoining one strand of the DNA duplex. Introduces a single-strand break via transesterification at a target site in duplex DNA. The scissile phosphodiester is attacked by the catalytic tyrosine of the enzyme, resulting in the formation of a DNA-(5'-phosphotyrosyl)-enzyme intermediate and the expulsion of a 3'-OH DNA strand. The free DNA strand than undergoes passage around the unbroken strand thus removing DNA supercoils. Finally, in the religation step, the DNA 3'-OH attacks the covalent intermediate to expel the active-site tyrosine and restore the DNA phosphodiester backbone. Weakly relaxes negative supercoils and displays a distinct preference for binding single-stranded DNA. In Drosophila melanogaster (Fruit fly), this protein is DNA topoisomerase 3-beta (Top3beta).